Reading from the N-terminus, the 262-residue chain is Phosphatidylserine decarboxylase proenzyme (262 aa).

Active-site charge relay system; for autoendoproteolytic cleavage activity residues include aspartate 86, histidine 142, and serine 226. Serine 226 acts as the Schiff-base intermediate with substrate; via pyruvic acid; for decarboxylase activity in catalysis. Residue serine 226 is modified to Pyruvic acid (Ser); by autocatalysis.

This sequence belongs to the phosphatidylserine decarboxylase family. PSD-B subfamily. Prokaryotic type I sub-subfamily. As to quaternary structure, heterodimer of a large membrane-associated beta subunit and a small pyruvoyl-containing alpha subunit. Pyruvate is required as a cofactor. Is synthesized initially as an inactive proenzyme. Formation of the active enzyme involves a self-maturation process in which the active site pyruvoyl group is generated from an internal serine residue via an autocatalytic post-translational modification. Two non-identical subunits are generated from the proenzyme in this reaction, and the pyruvate is formed at the N-terminus of the alpha chain, which is derived from the carboxyl end of the proenzyme. The autoendoproteolytic cleavage occurs by a canonical serine protease mechanism, in which the side chain hydroxyl group of the serine supplies its oxygen atom to form the C-terminus of the beta chain, while the remainder of the serine residue undergoes an oxidative deamination to produce ammonia and the pyruvoyl prosthetic group on the alpha chain. During this reaction, the Ser that is part of the protease active site of the proenzyme becomes the pyruvoyl prosthetic group, which constitutes an essential element of the active site of the mature decarboxylase.

Its subcellular location is the cell membrane. It catalyses the reaction a 1,2-diacyl-sn-glycero-3-phospho-L-serine + H(+) = a 1,2-diacyl-sn-glycero-3-phosphoethanolamine + CO2. The protein operates within phospholipid metabolism; phosphatidylethanolamine biosynthesis; phosphatidylethanolamine from CDP-diacylglycerol: step 2/2. In terms of biological role, catalyzes the formation of phosphatidylethanolamine (PtdEtn) from phosphatidylserine (PtdSer). This chain is Phosphatidylserine decarboxylase proenzyme, found in Bacillus cereus (strain B4264).